Reading from the N-terminus, the 64-residue chain is Temporin-ALf (64 aa).

Residues 1–22 (MFTLKKSLLLLFFLGTINLSLC) form the signal peptide. Positions 23–46 (EQERNAEEERRDEPDERNAEVEKR) are excised as a propeptide. Leucine 62 carries the leucine amide modification.

As to expression, expressed by the skin glands.

The protein resides in the secreted. Its function is as follows. Antimicrobial peptide with activity against Gram-positive and Gram-negative bacteria and against fungi. Has been tested against S.aureus (MIC=2.5 ug/mL), B.pumilus (MIC=5.0 ug/mL), B.cereus (MIC=30.0 ug/mL), E.coli (MIC=2.5 ug/mL), B.dysenteriae (MIC=5.0 ug/mL), A.cacoaceticus (MIC=30.0 ug/mL), P.aeruginosa (MIC=5.0 ug/mL) and C.albicans (MIC=2.5 ug/mL). Also shows a weak hemolytic activity. The chain is Temporin-ALf from Amolops loloensis (Lolokou Sucker Frog).